A 200-amino-acid polypeptide reads, in one-letter code: MGSDSEILNRELSKLSDEDLLACTKEELVNRLRKEESDKMSALIQRGRLIKEVNKQLQGHLLEIRELKVINQRLQEENQELRDLCCFLDDDRLKVKKLAREWQLFGHHAAKVMREDLGGYLKKLADLERMQDGLVKENLDLKELCLVLEEECVSRSDSSPGGSTDLNIPCMVARDVGDGSSSTGSVGSPDQLHLVCSPDD.

Positions 57-84 (LQGHLLEIRELKVINQRLQEENQELRDL) form a coiled coil. Positions 178 to 188 (DGSSSTGSVGS) are enriched in low complexity. Residues 178 to 200 (DGSSSTGSVGSPDQLHLVCSPDD) are disordered.

This sequence belongs to the CCDC85 family.

It localises to the nucleus. Its subcellular location is the cytoplasm. It is found in the cytoskeleton. The protein localises to the microtubule organizing center. The protein resides in the centrosome. It localises to the cell junction. Its subcellular location is the adherens junction. Functions as a transcriptional repressor. May inhibit the activity of CTNNB1 in a TP53-dependent manner and thus regulate cell growth. May function in adipocyte differentiation, negatively regulating mitotic clonal expansion. Plays a role in cell-cell adhesion and epithelium development through its interaction with proteins of the beta-catenin family. The polypeptide is Coiled-coil domain-containing protein 85B (ccdc85b) (Danio rerio (Zebrafish)).